Reading from the N-terminus, the 188-residue chain is Threonylcarbamoyl-AMP synthase (188 aa).

One can recognise a YrdC-like domain in the interval 3-188 (QLSSTQVTPV…RSGLVLRNGQ (186 aa)).

This sequence belongs to the SUA5 family. TsaC subfamily.

The protein resides in the cytoplasm. The enzyme catalyses L-threonine + hydrogencarbonate + ATP = L-threonylcarbamoyladenylate + diphosphate + H2O. Required for the formation of a threonylcarbamoyl group on adenosine at position 37 (t(6)A37) in tRNAs that read codons beginning with adenine. Catalyzes the conversion of L-threonine, HCO(3)(-)/CO(2) and ATP to give threonylcarbamoyl-AMP (TC-AMP) as the acyladenylate intermediate, with the release of diphosphate. This Shewanella denitrificans (strain OS217 / ATCC BAA-1090 / DSM 15013) protein is Threonylcarbamoyl-AMP synthase.